A 339-amino-acid chain; its full sequence is Ketol-acid reductoisomerase (NADP(+)) (339 aa).

One can recognise a KARI N-terminal Rossmann domain in the interval 1-182 (MRVYYDRDAD…GGGRSGVIET (182 aa)). Residues 24–27 (YGSQ), Arg48, Ser51, Thr53, and 83–86 (DELQ) each bind NADP(+). The active site involves His108. Gly134 serves as a coordination point for NADP(+). The KARI C-terminal knotted domain maps to 183–328 (TFKEECETDL…GKLRAMMPWI (146 aa)). 4 residues coordinate Mg(2+): Asp191, Glu195, Glu227, and Glu231. Ser252 is a binding site for substrate.

This sequence belongs to the ketol-acid reductoisomerase family. Mg(2+) is required as a cofactor.

The enzyme catalyses (2R)-2,3-dihydroxy-3-methylbutanoate + NADP(+) = (2S)-2-acetolactate + NADPH + H(+). The catalysed reaction is (2R,3R)-2,3-dihydroxy-3-methylpentanoate + NADP(+) = (S)-2-ethyl-2-hydroxy-3-oxobutanoate + NADPH + H(+). Its pathway is amino-acid biosynthesis; L-isoleucine biosynthesis; L-isoleucine from 2-oxobutanoate: step 2/4. It participates in amino-acid biosynthesis; L-valine biosynthesis; L-valine from pyruvate: step 2/4. In terms of biological role, involved in the biosynthesis of branched-chain amino acids (BCAA). Catalyzes an alkyl-migration followed by a ketol-acid reduction of (S)-2-acetolactate (S2AL) to yield (R)-2,3-dihydroxy-isovalerate. In the isomerase reaction, S2AL is rearranged via a Mg-dependent methyl migration to produce 3-hydroxy-3-methyl-2-ketobutyrate (HMKB). In the reductase reaction, this 2-ketoacid undergoes a metal-dependent reduction by NADPH to yield (R)-2,3-dihydroxy-isovalerate. The polypeptide is Ketol-acid reductoisomerase (NADP(+)) (Brucella abortus (strain S19)).